Consider the following 588-residue polypeptide: Myc box-dependent-interacting protein 1 (588 aa).

Alanine 2 is modified (N-acetylalanine). The interaction with BIN2 stretch occupies residues 2–122 (AEMGSKGVTA…DYHQKLVDQA (121 aa)). Coiled coils occupy residues 15–42 (ASNVQKKLTRAQEKVLQKLGKADETKDE) and 193–274 (HLVA…EKQH). The 248-residue stretch at 29 to 276 (VLQKLGKADE…LVSLEKQHGS (248 aa)) folds into the BAR domain. A disordered region spans residues 279–355 (FTVKAQPSDN…PKHTPSKEMK (77 aa)). Phosphoserine occurs at positions 296, 298, and 304. Threonine 308 carries the phosphothreonine modification. Serine 324 and serine 332 each carry phosphoserine. The tract at residues 379-422 (FEAPGPFSEQASLLDLDFEPLPPVASPVKAPTPSGQSIPWDLWE) is clathrin-binding. The interval 448-484 (PSQTAEPGPAQPAEASEVVGGAQEPGETAASEATSSS) is disordered. The span at 474-484 (ETAASEATSSS) shows a compositional bias: low complexity. The SH3 domain maps to 515 to 588 (GFMFKVQAQH…FPENFTERVQ (74 aa)).

In terms of assembly, heterodimer with AMPH. Binds SH3GLB1. Interacts (via SH3 domain) with DNM1. Interacts with SYNJ1. Interacts (via SH3 domain) with DNM2. Interacts with CLTC. Interacts with AP2A2. Interacts with AP2B1. Interacts with MYC (via N-terminal transactivation domain); the interaction requires the integrity of the conserved MYC box regions 1 and 2. Interacts with BIN2. Interacts with SNX4. Interacts (via BAR domain) with BACE1. Binds (via BAR domain) F-actin. Post-translationally, phosphorylated by protein kinase C. Isoform 1 is expressed mainly in the brain. Isoform 2 is widely expressed.

It localises to the nucleus. Its subcellular location is the cytoplasm. The protein resides in the endosome. It is found in the cell membrane. The protein localises to the sarcolemma. It localises to the T-tubule. In terms of biological role, is a key player in the control of plasma membrane curvature, and membrane shaping and remodeling. Required in muscle cells for the formation of T-tubules, tubular invaginations of the plasma membrane that function in depolarization-contraction coupling. Required in muscle cells for the formation of T-tubules, tubular invaginations of the plasma membrane that function in depolarization-contraction coupling. Is a negative regulator of endocytosis. Is also involved in the regulation of intracellular vesicles sorting, modulation of BACE1 trafficking and the control of amyloid-beta production. In neuronal circuits, endocytosis regulation may influence the internalization of PHF-tau aggregates. May be involved in the regulation of MYC activity and the control cell proliferation. The sequence is that of Myc box-dependent-interacting protein 1 (Bin1) from Mus musculus (Mouse).